The chain runs to 73 residues: MSAQKIYLASLLLFICLVFPQSTAIVCNFEGHCVTSDDCINVCKSGEDPFLCVRSGPHKGMCCCLKTNGSVLE.

The first 24 residues, 1–24 (MSAQKIYLASLLLFICLVFPQSTA), serve as a signal peptide directing secretion. 4 cysteine pairs are disulfide-bonded: cysteine 27-cysteine 64, cysteine 33-cysteine 52, cysteine 39-cysteine 62, and cysteine 43-cysteine 63.

This sequence belongs to the DEFL family.

Its subcellular location is the secreted. In Arabidopsis thaliana (Mouse-ear cress), this protein is Putative defensin-like protein 277.